A 321-amino-acid chain; its full sequence is Fimbria adhesin protein (321 aa).

The N-terminal stretch at 1 to 18 is a signal peptide; sequence MKKLTLFIGLMALGTTSA.

Belongs to the fimbrial protein family.

It is found in the fimbrium. The protein is Fimbria adhesin protein (mrkD) of Klebsiella pneumoniae.